Here is a 232-residue protein sequence, read N- to C-terminus: Ubiquinone biosynthesis O-methyltransferase (232 aa).

S-adenosyl-L-methionine is bound by residues Arg36, Gly55, Asp76, and Leu120.

This sequence belongs to the methyltransferase superfamily. UbiG/COQ3 family.

The enzyme catalyses a 3-demethylubiquinol + S-adenosyl-L-methionine = a ubiquinol + S-adenosyl-L-homocysteine + H(+). The catalysed reaction is a 3-(all-trans-polyprenyl)benzene-1,2-diol + S-adenosyl-L-methionine = a 2-methoxy-6-(all-trans-polyprenyl)phenol + S-adenosyl-L-homocysteine + H(+). It participates in cofactor biosynthesis; ubiquinone biosynthesis. O-methyltransferase that catalyzes the 2 O-methylation steps in the ubiquinone biosynthetic pathway. The protein is Ubiquinone biosynthesis O-methyltransferase of Pseudomonas aeruginosa (strain UCBPP-PA14).